Here is a 546-residue protein sequence, read N- to C-terminus: MSAKDVKFGGDARVRMMEGVNILANAVKVTLGPKGRNVVLEKSFGAPTVTKDGVSVAKEIELKDKFENMGAQMVKEVASKTSDIAGDGTTTATVLAQAMVREGLKAVAAGMNPMDLKRGMDKAVEAATEELKKLSKPCPRPMAIAQVGTISANSDDSIGTIIAEAMEKVGKEGVITVEDGTSLQNELDVVEGMQFDRGYLSPYFINNQQSQSAELDAPYILLYDKKISNIRDLLPVLEGVAKAGKPLLIIAEDVEGEALATLVVNTIRGIVKVCAVKAPGFGDRRKAMLQDIAILTGATVISEEVGLSLEKATLTDLGTAKRVQVGKDETTIIDGSGSEIDIKARCEQIRAQVEETSSDYDREKLQERLAKLAGGVAVIKVGAATEIEMKEKKARVEDALHATRAAVEEGIVPGGGVALVRAIAAVKDLKGANHDQDVGIAIARRAMEEPLRQIVANAGEEPSVILHKVAEGTGNFGYNAANGEYGDMVEMGILDPTKVTRSALQNSCSVAGLMITTEAMIADEPKDDAPAMPGGGMGDMGGMGMM.

ATP-binding positions include 30–33 (TLGP), K51, 87–91 (DGTTT), G415, 479–481 (NAA), and D495.

The protein belongs to the chaperonin (HSP60) family. As to quaternary structure, forms a cylinder of 14 subunits composed of two heptameric rings stacked back-to-back. Interacts with the co-chaperonin GroES.

It is found in the cytoplasm. It catalyses the reaction ATP + H2O + a folded polypeptide = ADP + phosphate + an unfolded polypeptide.. Functionally, together with its co-chaperonin GroES, plays an essential role in assisting protein folding. The GroEL-GroES system forms a nano-cage that allows encapsulation of the non-native substrate proteins and provides a physical environment optimized to promote and accelerate protein folding. This chain is Chaperonin GroEL, found in Allochromatium vinosum (Chromatium vinosum).